The chain runs to 559 residues: Vacuolar protein 8 (559 aa).

A lipid anchor (N-myristoyl glycine) is attached at G2. C4 carries the S-palmitoyl cysteine lipid modification. ARM repeat units lie at residues 77 to 116 (TERD…NLAV), 118 to 157 (TENK…NLAT), 159 to 198 (EENK…NMTH), 200 to 239 (DENR…NIAV), 243 to 282 (NRRK…NLAS), 284 to 323 (EKYQ…NISI), 325 to 365 (PMNE…NLAA), and 409 to 448 (DDLK…NLSS).

The protein belongs to the beta-catenin family.

The protein resides in the vacuole membrane. In terms of biological role, functions in both vacuole inheritance and protein targeting from the cytoplasm to vacuole. This is Vacuolar protein 8 (VAC8) from Gibberella zeae (strain ATCC MYA-4620 / CBS 123657 / FGSC 9075 / NRRL 31084 / PH-1) (Wheat head blight fungus).